A 197-amino-acid chain; its full sequence is Alkyl hydroperoxide reductase C (197 aa).

The Thioredoxin domain occupies 2–163; sequence VLVTQNAPNF…MIRMVDALDF (162 aa). Cysteine 50 (cysteine sulfenic acid (-SOH) intermediate) is an active-site residue.

This sequence belongs to the peroxiredoxin family. AhpC/Prx1 subfamily. As to quaternary structure, homodimer; disulfide-linked, upon oxidation. 5 homodimers assemble to form a ring-like decamer.

Its subcellular location is the cytoplasm. The enzyme catalyses a hydroperoxide + NADH + H(+) = an alcohol + NAD(+) + H2O. Its function is as follows. Thiol-specific peroxidase that catalyzes the reduction of hydrogen peroxide and organic hydroperoxides to water and alcohols, respectively. Plays a role in cell protection against oxidative stress by detoxifying peroxides. The polypeptide is Alkyl hydroperoxide reductase C (Buchnera aphidicola subsp. Acyrthosiphon pisum (strain APS) (Acyrthosiphon pisum symbiotic bacterium)).